The sequence spans 335 residues: Glyceraldehyde-3-phosphate dehydrogenase (335 aa).

NAD(+) is bound by residues 12 to 13, D34, R78, and S120; that span reads RI. D-glyceraldehyde 3-phosphate is bound by residues 151–153 and T182; that span reads SCT. The active-site Nucleophile is C152. NAD(+) is bound at residue N183. Residues R197, 210-211, and R233 each bind D-glyceraldehyde 3-phosphate; that span reads TG. N315 is an NAD(+) binding site.

This sequence belongs to the glyceraldehyde-3-phosphate dehydrogenase family. Homotetramer.

Its subcellular location is the cytoplasm. It carries out the reaction D-glyceraldehyde 3-phosphate + phosphate + NAD(+) = (2R)-3-phospho-glyceroyl phosphate + NADH + H(+). The protein operates within carbohydrate degradation; glycolysis; pyruvate from D-glyceraldehyde 3-phosphate: step 1/5. Its function is as follows. Catalyzes the oxidative phosphorylation of glyceraldehyde 3-phosphate (G3P) to 1,3-bisphosphoglycerate (BPG) using the cofactor NAD. The first reaction step involves the formation of a hemiacetal intermediate between G3P and a cysteine residue, and this hemiacetal intermediate is then oxidized to a thioester, with concomitant reduction of NAD to NADH. The reduced NADH is then exchanged with the second NAD, and the thioester is attacked by a nucleophilic inorganic phosphate to produce BPG. The protein is Glyceraldehyde-3-phosphate dehydrogenase (gap) of Geobacillus stearothermophilus (Bacillus stearothermophilus).